A 39-amino-acid chain; its full sequence is Photosystem II reaction center protein J (39 aa).

Residues 9–29 (LWLVVTFGGIVVLTVLGIFIY) form a helical membrane-spanning segment.

Belongs to the PsbJ family. PSII is composed of 1 copy each of membrane proteins PsbA, PsbB, PsbC, PsbD, PsbE, PsbF, PsbH, PsbI, PsbJ, PsbK, PsbL, PsbM, PsbT, PsbY, PsbZ, Psb30/Ycf12, at least 3 peripheral proteins of the oxygen-evolving complex and a large number of cofactors. It forms dimeric complexes.

The protein resides in the plastid. It is found in the chloroplast thylakoid membrane. One of the components of the core complex of photosystem II (PSII). PSII is a light-driven water:plastoquinone oxidoreductase that uses light energy to abstract electrons from H(2)O, generating O(2) and a proton gradient subsequently used for ATP formation. It consists of a core antenna complex that captures photons, and an electron transfer chain that converts photonic excitation into a charge separation. The polypeptide is Photosystem II reaction center protein J (Cyanidium caldarium (Red alga)).